Reading from the N-terminus, the 241-residue chain is Endothelial protein C receptor (241 aa).

Residues 1 to 17 (MLTTLLPLLPLLLPGWA) form the signal peptide. Topologically, residues 18–212 (LCSQEASDGP…GSQTGRSYTS (195 aa)) are extracellular. N-linked (GlcNAc...) asparagine glycans are attached at residues Asn-49, Asn-66, Asn-138, and Asn-174. Disulfide bonds link Cys-120/Cys-188 and Cys-221/Cys-234. Residues 213 to 233 (LVLGVLVGCFIVTGVAVGIFL) form a helical membrane-spanning segment. Topologically, residues 234–241 (CTGGRRRC) are cytoplasmic.

As to expression, expressed in endothelial cells.

Its subcellular location is the membrane. Functionally, binds activated protein C. Enhances protein C activation by the thrombin-thrombomodulin complex; plays a role in the protein C pathway controlling blood coagulation. The protein is Endothelial protein C receptor (PROCR) of Bos taurus (Bovine).